The primary structure comprises 722 residues: Serine/threonine-protein kinase dkf-1 (722 aa).

Phorbol-ester/DAG-type zinc fingers lie at residues 98 to 148 and 186 to 236; these read PHVV…RNNC and PHTL…ASNC. Residues 279 to 407 form the PH domain; that stretch reads KKLEGWMMHF…QFIKESLQPP (129 aa). Residues 426–685 enclose the Protein kinase domain; sequence VLSDKTLGSG…IEQCLDHGWL (260 aa). ATP is bound by residues 432 to 440 and lysine 455; that span reads LGSGQFGTV. The Proton acceptor role is filled by aspartate 551. At threonine 588 the chain carries Phosphothreonine.

Belongs to the protein kinase superfamily. CAMK Ser/Thr protein kinase family. PKD subfamily. Mg(2+) is required as a cofactor. Post-translationally, prolonged phosphorylation at Thr-588 results in ubiquitination and degradation. Highly expressed in embryos and at lower levels through the four larval stages in adults. Present in a region bounded by the anterior and posterior bulbs of the pharynx and an area of the tail containing the lumbar, dorsorectal and pre-anal ganglia. Expressed in neurons.

Its subcellular location is the cytoplasm. The protein localises to the membrane. The enzyme catalyses L-seryl-[protein] + ATP = O-phospho-L-seryl-[protein] + ADP + H(+). It carries out the reaction L-threonyl-[protein] + ATP = O-phospho-L-threonyl-[protein] + ADP + H(+). With respect to regulation, activated by DAG and phorbol esters. Phorbol-ester/DAG-type domain 1 binds phorbol ester with high affinity and mediates accumulation at the cell periphery. Phorbol-ester/DAG-type domain 2 binds phorbol ester with low affinity but may mediate initial contact, resulting in a conformational change allowing previously occluded domain 1 to anchor the kinase. Phosphorylation on Thr-588 is then also required for activation and may also result in a further conformational change. Functionally, converts transient diacylglycerol (DAG) signals into prolonged physiological effects, independently of PKC. Role in the regulation of growth and neuromuscular control of movement. Involved in immune response to S.aureus bacterium by activating transcription factor hlh-30 downstream of phospholipase plc-1. The protein is Serine/threonine-protein kinase dkf-1 (dkf-1) of Caenorhabditis elegans.